The chain runs to 175 residues: uncharacterized protein (175 aa).

This is an uncharacterized protein from Archaeoglobus fulgidus (strain ATCC 49558 / DSM 4304 / JCM 9628 / NBRC 100126 / VC-16).